The sequence spans 193 residues: Thioredoxin reductase-like selenoprotein T1a (193 aa).

The signal sequence occupies residues 1-21; the sequence is MRWLPFSALLLWALCLHSASA. Positions 44-47 form a cross-link, cysteinyl-selenocysteine (Cys-Sec); that stretch reads CVSU. A non-standard amino acid (selenocysteine) is located at residue selenocysteine 47. The chain crosses the membrane as a helical span at residues 83 to 101; it reads IASFLSMFKLLLIGVIILG.

It belongs to the SelWTH family. Selenoprotein T subfamily. May contain a selenide-sulfide bond between Cys-44 and Sec-47. This bond is speculated to serve as redox-active pair. In terms of tissue distribution, expressed in embryonic olfactory vesicles and the photoreceptor cell layer of the embryonic retina. Low level in embryonic epiphysis.

Its subcellular location is the endoplasmic reticulum membrane. The enzyme catalyses [thioredoxin]-dithiol + NADP(+) = [thioredoxin]-disulfide + NADPH + H(+). Selenoprotein with thioredoxin reductase-like oxidoreductase activity. This Danio rerio (Zebrafish) protein is Thioredoxin reductase-like selenoprotein T1a.